A 513-amino-acid polypeptide reads, in one-letter code: Autophagy-related protein 18 (513 aa).

One copy of the WD 1 repeat lies at 2 to 40 (SDLPIINFINFNQNGTCISIGTSQGFKIFNCEPFGRFYQ). Residues 167-225 (NNINIKKSDAAEDPLRKDHFAYDPSDHSHPQSTTESTSNNHNRTYSSGNNNNTNSNPNK) form a disordered region. Positions 172 to 195 (KKSDAAEDPLRKDHFAYDPSDHSH) are enriched in basic and acidic residues. A compositionally biased stretch (low complexity) spans 205–225 (NNHNRTYSSGNNNNTNSNPNK). The WD 2 repeat unit spans residues 248 to 288 (AHKGEIAALKLSADGTLLATASEKGTIIRVFNVENGSKVYQ). The necessary for proper localization to vacuole membrane stretch occupies residues 289 to 292 (FRRG). Positions 289–293 (FRRGT) match the L/FRRG motif motif. The WD 3 repeat unit spans residues 293-332 (TYSTKISSLSFSKDNQFLAVCSSSKTVHIFKLGEKIIDNT). A disordered region spans residues 333–398 (KPNELNSDDD…TVGRMIRKSS (66 aa)). Positions 338-369 (NSDDDMDDDLLPQFENGDDEEEVDEETLDEEA) are enriched in acidic residues.

Belongs to the WD repeat PROPPIN family. Component of the PI(3,5)P2 regulatory complex. Interacts with ATG2 and ATG9. The ATG2-ATG18 complex is essential for autophagosome formation.

It localises to the preautophagosomal structure membrane. Its subcellular location is the vacuole membrane. It is found in the endosome membrane. Component of the PI(3,5)P2 regulatory complex that regulates both the synthesis and turnover of phosphatidylinositol 3,5-bisphosphate (PtdIns(3,5)P2). Plays an important role in osmotically-induced vacuole fragmentation. Required for cytoplasm to vacuole transport (Cvt) vesicle formation, pexophagy and starvation-induced autophagy. Involved in correct ATG9 trafficking to the pre-autophagosomal structure. With ATG2, protects ATG8 from ATG4-mediated cleavage. This chain is Autophagy-related protein 18, found in Kluyveromyces marxianus (strain DMKU3-1042 / BCC 29191 / NBRC 104275) (Yeast).